A 207-amino-acid polypeptide reads, in one-letter code: Probable GTP-binding protein EngB (207 aa).

Positions 23–203 constitute an EngB-type G domain; that stretch reads GAPEVCFVGR…GAHIENWISP (181 aa). GTP is bound by residues 31–38, 58–62, 83–86, 150–153, and 182–184; these read GRSNAGKS, GRTRL, DLPG, TKAD, and FSS. Ser38 and Thr60 together coordinate Mg(2+).

This sequence belongs to the TRAFAC class TrmE-Era-EngA-EngB-Septin-like GTPase superfamily. EngB GTPase family. The cofactor is Mg(2+).

Functionally, necessary for normal cell division and for the maintenance of normal septation. The sequence is that of Probable GTP-binding protein EngB from Bordetella bronchiseptica (strain ATCC BAA-588 / NCTC 13252 / RB50) (Alcaligenes bronchisepticus).